We begin with the raw amino-acid sequence, 288 residues long: MTANLKVLASVFKLRIGVFCALAAIAGALATPGAVPDFAPVMAVALAVLLSAAAAGAFNHYWERDIDPMMNRTRNRPFATGQFAAGPLWPLGLLALTVAAVALAAFAANAWAALHVFLGAFVYGIVYTVWLKRRTAWNIVIGGLSGSFAVLAGAAVAVPTLSPESLILALVLFLWTPPHFWSLATALKDDYAAAGIPMLPVVCSETETNRIILANTIALVASSLLPAFFGAGPLYLGAAILGGGWFLYKSVALVRRPGRKAAMGNFFASLIQLVLLLTAVMVEPLLAG.

8 helical membrane-spanning segments follow: residues 16–36 (IGVF…GAVP), 38–58 (FAPV…AGAF), 88–108 (LWPL…AFAA), 111–131 (WAAL…TVWL), 139–159 (IVIG…VAVP), 166–186 (LILA…LATA), 227–247 (AFFG…GWFL), and 266–286 (FFAS…EPLL).

This sequence belongs to the UbiA prenyltransferase family. Protoheme IX farnesyltransferase subfamily.

The protein localises to the cell inner membrane. The catalysed reaction is heme b + (2E,6E)-farnesyl diphosphate + H2O = Fe(II)-heme o + diphosphate. It participates in porphyrin-containing compound metabolism; heme O biosynthesis; heme O from protoheme: step 1/1. Functionally, converts heme B (protoheme IX) to heme O by substitution of the vinyl group on carbon 2 of heme B porphyrin ring with a hydroxyethyl farnesyl side group. In Paramagnetospirillum magneticum (strain ATCC 700264 / AMB-1) (Magnetospirillum magneticum), this protein is Protoheme IX farnesyltransferase 2.